The following is a 118-amino-acid chain: Large ribosomal subunit protein bL20 (118 aa).

Belongs to the bacterial ribosomal protein bL20 family.

Binds directly to 23S ribosomal RNA and is necessary for the in vitro assembly process of the 50S ribosomal subunit. It is not involved in the protein synthesizing functions of that subunit. This chain is Large ribosomal subunit protein bL20, found in Sulfurimonas denitrificans (strain ATCC 33889 / DSM 1251) (Thiomicrospira denitrificans (strain ATCC 33889 / DSM 1251)).